Consider the following 226-residue polypeptide: Cytochrome c oxidase subunit 2 (226 aa).

Topologically, residues 1 to 25 (MNTWLLSLQNSNSPTYDMMIFFHDF) are mitochondrial intermembrane. The chain crosses the membrane as a helical span at residues 26 to 47 (TMMILIFITLLILFIMFTMINN). Topologically, residues 48–61 (NLINRFLLQGHFIE) are mitochondrial matrix. The chain crosses the membrane as a helical span at residues 62–81 (LIWTITPMIILILIAIPSFK). Topologically, residues 82–226 (ILYLTDEMFN…YFKNWLKSFL (145 aa)) are mitochondrial intermembrane. Cu cation is bound by residues H160, C195, E197, C199, H203, and M206. E197 lines the Mg(2+) pocket.

Belongs to the cytochrome c oxidase subunit 2 family. In terms of assembly, component of the cytochrome c oxidase (complex IV, CIV), a multisubunit enzyme composed of a catalytic core of 3 subunits and several supernumerary subunits. The complex exists as a monomer or a dimer and forms supercomplexes (SCs) in the inner mitochondrial membrane with ubiquinol-cytochrome c oxidoreductase (cytochrome b-c1 complex, complex III, CIII). Cu cation is required as a cofactor.

It is found in the mitochondrion inner membrane. It catalyses the reaction 4 Fe(II)-[cytochrome c] + O2 + 8 H(+)(in) = 4 Fe(III)-[cytochrome c] + 2 H2O + 4 H(+)(out). Its function is as follows. Component of the cytochrome c oxidase, the last enzyme in the mitochondrial electron transport chain which drives oxidative phosphorylation. The respiratory chain contains 3 multisubunit complexes succinate dehydrogenase (complex II, CII), ubiquinol-cytochrome c oxidoreductase (cytochrome b-c1 complex, complex III, CIII) and cytochrome c oxidase (complex IV, CIV), that cooperate to transfer electrons derived from NADH and succinate to molecular oxygen, creating an electrochemical gradient over the inner membrane that drives transmembrane transport and the ATP synthase. Cytochrome c oxidase is the component of the respiratory chain that catalyzes the reduction of oxygen to water. Electrons originating from reduced cytochrome c in the intermembrane space (IMS) are transferred via the dinuclear copper A center (CU(A)) of subunit 2 and heme A of subunit 1 to the active site in subunit 1, a binuclear center (BNC) formed by heme A3 and copper B (CU(B)). The BNC reduces molecular oxygen to 2 water molecules using 4 electrons from cytochrome c in the IMS and 4 protons from the mitochondrial matrix. This is Cytochrome c oxidase subunit 2 (COII) from Lasius sp.